A 298-amino-acid polypeptide reads, in one-letter code: Acetylglutamate kinase (298 aa).

Substrate-binding positions include 69 to 70 (GG), R91, and N196.

It belongs to the acetylglutamate kinase family. ArgB subfamily.

Its subcellular location is the cytoplasm. It catalyses the reaction N-acetyl-L-glutamate + ATP = N-acetyl-L-glutamyl 5-phosphate + ADP. It participates in amino-acid biosynthesis; L-arginine biosynthesis; N(2)-acetyl-L-ornithine from L-glutamate: step 2/4. In terms of biological role, catalyzes the ATP-dependent phosphorylation of N-acetyl-L-glutamate. This chain is Acetylglutamate kinase, found in Bradyrhizobium sp. (strain BTAi1 / ATCC BAA-1182).